The following is a 231-amino-acid chain: Large ribosomal subunit protein uL1 (231 aa).

This sequence belongs to the universal ribosomal protein uL1 family. As to quaternary structure, part of the 50S ribosomal subunit.

In terms of biological role, binds directly to 23S rRNA. The L1 stalk is quite mobile in the ribosome, and is involved in E site tRNA release. Protein L1 is also a translational repressor protein, it controls the translation of the L11 operon by binding to its mRNA. In Hydrogenovibrio crunogenus (strain DSM 25203 / XCL-2) (Thiomicrospira crunogena), this protein is Large ribosomal subunit protein uL1.